Here is a 375-residue protein sequence, read N- to C-terminus: Succinyl-diaminopimelate desuccinylase (375 aa).

Position 66 (H66) interacts with Zn(2+). D68 is an active-site residue. Zn(2+) is bound at residue D99. The Proton acceptor role is filled by E133. Zn(2+)-binding residues include E134, E162, and H348.

Belongs to the peptidase M20A family. DapE subfamily. Homodimer. It depends on Zn(2+) as a cofactor. Co(2+) is required as a cofactor.

It catalyses the reaction N-succinyl-(2S,6S)-2,6-diaminopimelate + H2O = (2S,6S)-2,6-diaminopimelate + succinate. Its pathway is amino-acid biosynthesis; L-lysine biosynthesis via DAP pathway; LL-2,6-diaminopimelate from (S)-tetrahydrodipicolinate (succinylase route): step 3/3. Functionally, catalyzes the hydrolysis of N-succinyl-L,L-diaminopimelic acid (SDAP), forming succinate and LL-2,6-diaminopimelate (DAP), an intermediate involved in the bacterial biosynthesis of lysine and meso-diaminopimelic acid, an essential component of bacterial cell walls. This is Succinyl-diaminopimelate desuccinylase from Salmonella choleraesuis (strain SC-B67).